Here is a 690-residue protein sequence, read N- to C-terminus: Elongation factor G (690 aa).

A tr-type G domain is found at Glu-8–Val-283. Residues Ala-17–Thr-24, Asp-81–His-85, and Asn-135–Asp-138 each bind GTP.

This sequence belongs to the TRAFAC class translation factor GTPase superfamily. Classic translation factor GTPase family. EF-G/EF-2 subfamily.

Its subcellular location is the cytoplasm. Its function is as follows. Catalyzes the GTP-dependent ribosomal translocation step during translation elongation. During this step, the ribosome changes from the pre-translocational (PRE) to the post-translocational (POST) state as the newly formed A-site-bound peptidyl-tRNA and P-site-bound deacylated tRNA move to the P and E sites, respectively. Catalyzes the coordinated movement of the two tRNA molecules, the mRNA and conformational changes in the ribosome. The sequence is that of Elongation factor G from Rhodopseudomonas palustris (strain BisA53).